Here is a 112-residue protein sequence, read N- to C-terminus: Putative iron-sulfur cluster insertion protein ErpA (112 aa).

Iron-sulfur cluster contacts are provided by Cys40, Cys104, and Cys106.

The protein belongs to the HesB/IscA family. As to quaternary structure, homodimer. Requires iron-sulfur cluster as cofactor.

Functionally, required for insertion of 4Fe-4S clusters. In Neisseria gonorrhoeae (strain ATCC 700825 / FA 1090), this protein is Putative iron-sulfur cluster insertion protein ErpA.